The primary structure comprises 89 residues: Putative regulatory protein PCC8801_0196 (89 aa).

The protein belongs to the RemA family.

This is Putative regulatory protein PCC8801_0196 from Rippkaea orientalis (strain PCC 8801 / RF-1) (Cyanothece sp. (strain PCC 8801)).